The chain runs to 562 residues: DNA-binding protein MutS2 (562 aa).

380 to 387 serves as a coordination point for ATP; the sequence is GANSGGKT.

This sequence belongs to the DNA mismatch repair MutS family. Archaeal Muts2 subfamily. In terms of assembly, multimer. Requires Co(2+) as cofactor. Mn(2+) serves as cofactor.

In terms of biological role, has ATPase and non-specific DNA-binding activities. May be involved in recombination and/or recombinational repair. Not involved in mismatch repair. In Pyrococcus furiosus (strain ATCC 43587 / DSM 3638 / JCM 8422 / Vc1), this protein is DNA-binding protein MutS2.